The following is an 803-amino-acid chain: Translation initiation factor IF-2 (803 aa).

Disordered stretches follow at residues proline 95–glutamate 125 and glutamate 138–glutamate 178. Over residues valine 111–asparagine 121 the composition is skewed to polar residues. Residues glutamate 138 to lysine 155 show a composition bias toward basic and acidic residues. Basic residues predominate over residues lysine 156 to lysine 167. Basic and acidic residues predominate over residues proline 168–glutamate 178. The tr-type G domain maps to proline 302 to lysine 471. The interval glycine 311 to threonine 318 is G1. Glycine 311 to threonine 318 is a binding site for GTP. The segment at glycine 336–histidine 340 is G2. A G3 region spans residues aspartate 357–glycine 360. Residues aspartate 357–histidine 361 and asparagine 411–aspartate 414 each bind GTP. Residues asparagine 411 to aspartate 414 form a G4 region. The tract at residues serine 447–lysine 449 is G5.

Belongs to the TRAFAC class translation factor GTPase superfamily. Classic translation factor GTPase family. IF-2 subfamily.

The protein localises to the cytoplasm. In terms of biological role, one of the essential components for the initiation of protein synthesis. Protects formylmethionyl-tRNA from spontaneous hydrolysis and promotes its binding to the 30S ribosomal subunits. Also involved in the hydrolysis of GTP during the formation of the 70S ribosomal complex. This is Translation initiation factor IF-2 from Coxiella burnetii (strain Dugway 5J108-111).